The chain runs to 224 residues: Redox-sensing transcriptional repressor Rex (224 aa).

The segment at residues 17–56 is a DNA-binding region (H-T-H motif); sequence RYHRYLEELLKNDVKRISSRELSEKMGVTASQIRQDLNNF. 91-96 contributes to the NAD(+) binding site; that stretch reads GAGNLG.

The protein belongs to the transcriptional regulatory Rex family. As to quaternary structure, homodimer.

Its subcellular location is the cytoplasm. Functionally, modulates transcription in response to changes in cellular NADH/NAD(+) redox state. The protein is Redox-sensing transcriptional repressor Rex of Thermoanaerobacter sp. (strain X514).